The primary structure comprises 592 residues: Probable auxin efflux carrier component 1c (592 aa).

The Extracellular portion of the chain corresponds to 1–6; sequence MITGAD. The chain crosses the membrane as a helical span at residues 7 to 27; sequence FYHVMTAMVPLYVAMILAYGS. The Cytoplasmic portion of the chain corresponds to 28–38; it reads VKWWRIFTPDQ. A helical membrane pass occupies residues 39 to 59; it reads CSGINRFVALFAVPLLSFHFI. Val51 contributes to the (indol-3-yl)acetate binding site. Topologically, residues 60–70 are extracellular; the sequence is STNNPYTMNLR. The helical transmembrane segment at 71–91 threads the bilayer; that stretch reads FIAADTLQKLIVLALLTLWSH. At 92–100 the chain is on the cytoplasmic side; it reads LSRRGSLEW. Residues 101–121 traverse the membrane as a helical segment; it reads TITLFSLSTLPNTLVMGIPLL. (indol-3-yl)acetate is bound by residues Asn112 and Leu114. At 122–131 the chain is on the extracellular side; the sequence is KGMYGEFSGS. A helical transmembrane segment spans residues 132–152; it reads LMVQIVVLQCIIWYTLMLFMF. (indol-3-yl)acetate is bound at residue Tyr145. Residues 153–452 lie on the Cytoplasmic side of the membrane; it reads EYRGARILIT…LIRNPNTYSS (300 aa). Disordered stretches follow at residues 214 to 236 and 282 to 331; these read RSDVYSRRSMGFSSTTPRPSNLT and GATP…AKGE. Polar residues predominate over residues 224–236; it reads GFSSTTPRPSNLT. The span at 309-318 shows a compositional bias: pro residues; that stretch reads APNPAMAAPP. A helical transmembrane segment spans residues 453–473; it reads LIGLIWSLVCFRWNFEMPAII. Residues 474 to 476 lie on the Extracellular side of the membrane; that stretch reads LKS. The chain crosses the membrane as a helical span at residues 477-497; that stretch reads ISILSDAGLGMAMFSLGLFMA. Topologically, residues 498-511 are cytoplasmic; the sequence is LQPRIIACGNKVAT. The helical transmembrane segment at 512–532 threads the bilayer; that stretch reads FAMAVRFLTGPAVMAAASIAV. Topologically, residues 533–537 are extracellular; it reads GLRGT. Residues 538–558 form a helical membrane-spanning segment; that stretch reads LLHVAIVQAALPQGIVPFVFA. Ile552 and Val553 together coordinate (indol-3-yl)acetate. The Cytoplasmic segment spans residues 559-571; the sequence is KEYSVHPDILSTA. The chain crosses the membrane as a helical span at residues 572–592; that stretch reads VIFGMLIALPITLVYYILLGL.

The protein belongs to the auxin efflux carrier (TC 2.A.69.1) family. In terms of assembly, homodimer. In terms of tissue distribution, expressed at low levels in roots and leaves. Expressed in roots, stem bases, stems, leaves and young panicles.

The protein localises to the membrane. Its function is as follows. May act as a component of the auxin efflux carrier. This is Probable auxin efflux carrier component 1c from Oryza sativa subsp. japonica (Rice).